An 884-amino-acid polypeptide reads, in one-letter code: Alanine--tRNA ligase (884 aa).

The Zn(2+) site is built by His-568, His-572, Cys-670, and His-674.

This sequence belongs to the class-II aminoacyl-tRNA synthetase family. It depends on Zn(2+) as a cofactor.

The protein resides in the cytoplasm. It carries out the reaction tRNA(Ala) + L-alanine + ATP = L-alanyl-tRNA(Ala) + AMP + diphosphate. Catalyzes the attachment of alanine to tRNA(Ala) in a two-step reaction: alanine is first activated by ATP to form Ala-AMP and then transferred to the acceptor end of tRNA(Ala). Also edits incorrectly charged Ser-tRNA(Ala) and Gly-tRNA(Ala) via its editing domain. The protein is Alanine--tRNA ligase of Synechococcus sp. (strain JA-2-3B'a(2-13)) (Cyanobacteria bacterium Yellowstone B-Prime).